Here is a 935-residue protein sequence, read N- to C-terminus: Progesterone receptor (935 aa).

The tract at residues 1–164 is AF3; mediates transcriptional activation; that stretch reads MTELKAKGPR…PATQRVLSPL (164 aa). Residues 1–256 are disordered; sequence MTELKAKGPR…AAAGGGAAAV (256 aa). The segment at 1-568 is modulating, Pro-Rich; sequence MTELKAKGPR…YSFESLPQKI (568 aa). Position 20 is a phosphoserine (S20). Positions 55–59 match the LXXL motif 1 motif; the sequence is LDGLL. The residue at position 81 (S81) is a Phosphoserine. Positions 115–119 match the LXXL motif 2 motif; it reads LDTLL. A phosphoserine mark is found at S130 and S162. The mediates transcriptional transrepression stretch occupies residues 165–305; the sequence is MSRSGGKAGD…LATTTMDFTH (141 aa). The Nuclear localization signal signature appears at 183–187; sequence KVLPR. S190 and S213 each carry phosphoserine. The segment covering 220–231 has biased composition (acidic residues); that stretch reads EVEEEDGSESED. The span at 232–246 shows a compositional bias: low complexity; sequence SAGPLLKGKPRALGG. At S294 the chain carries Phosphoserine; by MAPK1. The disordered stretch occupies residues 328-353; the sequence is SYDGGAGAASAFAPPRSSPSASSTPV. Residues 335–350 are compositionally biased toward low complexity; it reads AASAFAPPRSSPSASS. The residue at position 345 (S345) is a Phosphoserine; by MAPK. A Glycyl lysine isopeptide (Lys-Gly) (interchain with G-Cter in SUMO); alternate cross-link involves residue K388. Residue K388 forms a Glycyl lysine isopeptide (Lys-Gly) (interchain with G-Cter in ubiquitin); alternate linkage. S400 bears the Phosphoserine; by CDK2 mark. A disordered region spans residues 415–452; the sequence is PDFPLGPPPPLPPRAPPSRPGEAAVTAAPAGASVSSAS. Residues 418–433 show a composition bias toward pro residues; that stretch reads PLGPPPPLPPRAPPSR. Low complexity predominate over residues 434-452; sequence PGEAAVTAAPAGASVSSAS. Residues 456 to 548 form an AF1; mediates transcriptional activation region; it reads STLECILYKA…VYPPYLNYLR (93 aa). K533 is covalently cross-linked (Glycyl lysine isopeptide (Lys-Gly) (interchain with G-Cter in SUMO)). NR C4-type zinc fingers lie at residues 569–589 and 605–629; these read CLIC…CGSC and CAGR…LRKC. The nuclear receptor DNA-binding region spans 569–641; that stretch reads CLICGDEASG…AGMVLGGRKF (73 aa). S678 is modified (phosphoserine). Residues 681-915 enclose the NR LBD domain; it reads QDIQLIPPLI…EFPEMMSEVI (235 aa). The segment at 689 to 935 is AF2; mediates transcriptional activation; that stretch reads LINLLVSIEP…MVKPLLFHKK (247 aa). R768 is a binding site for progesterone.

Belongs to the nuclear hormone receptor family. As to quaternary structure, interacts with SMARD1 and UNC45A. Interacts with CUEDC2; the interaction promotes ubiquitination, decreases sumoylation, and represses transcriptional activity. Interacts with PIAS3; the interaction promotes sumoylation of PR in a hormone-dependent manner, inhibits DNA-binding, and alters nuclear export. Interacts with SP1; the interaction requires ligand-induced phosphorylation on Ser-345 by ERK1/2-MAPK. Interacts with PRMT2. Interacts with NCOA2 and NCOA1. Interacts with KLF9. Interacts with GTF2B. Post-translationally, phosphorylated on multiple serine sites. Several of these sites are hormone-dependent. Phosphorylation on Ser-294 is highly hormone-dependent and modulates ubiquitination and sumoylation on Lys-388. Phosphorylation on Ser-345 also requires induction by hormone. Basal phosphorylation on Ser-81, Ser-162, Ser-190 and Ser-400 is increased in response to progesterone and can be phosphorylated in vitro by the CDK2-A1 complex. Increased levels of phosphorylation on Ser-400 also in the presence of EGF, heregulin, IGF, PMA and FBS. Phosphorylation at this site by CDK2 is ligand-independent, and increases nuclear translocation and transcriptional activity. Phosphorylation at Ser-162 and Ser-294, but not at Ser-190, is impaired during the G(2)/M phase of the cell cycle. Phosphorylation on Ser-345 by ERK1/2 MAPK is required for interaction with SP1. In terms of processing, sumoylation is hormone-dependent and represses transcriptional activity. Sumoylation on all three sites is enhanced by PIAS3. Desumoylated by SENP1. Sumoylation on Lys-388, the main site of sumoylation, is repressed by ubiquitination on the same site, and modulated by phosphorylation at Ser-294. Ubiquitination is hormone-dependent and represses sumoylation on the same site. Promoted by MAPK-mediated phosphorylation on Ser-294. Ubiquitinated by UBR5, leading to its degradation: UBR5 specifically recognizes and binds ligand-bound PGR when it is not associated with coactivators (NCOAs). In presence of NCOAs, the UBR5-degron is not accessible, preventing its ubiquitination and degradation. Post-translationally, palmitoylated by ZDHHC7 and ZDHHC21. Palmitoylation is required for plasma membrane targeting and for rapid intracellular signaling via ERK and AKT kinases and cAMP generation.

The protein resides in the nucleus. It localises to the cytoplasm. In terms of biological role, the steroid hormones and their receptors are involved in the regulation of eukaryotic gene expression and affect cellular proliferation and differentiation in target tissues. Transcriptional activator of several progesteron-dependent promoters in a variety of cell types. Involved in activation of SRC-dependent MAPK signaling on hormone stimulation. The chain is Progesterone receptor (PGR) from Macaca sylvanus (Barbary macaque).